A 504-amino-acid polypeptide reads, in one-letter code: Pre-mRNA-processing factor 19 (504 aa).

At Ser2 the chain carries N-acetylserine. A U-box domain is found at 2-73; the sequence is SLICSISNEV…KPPSATSIPA (72 aa). The may mediate interaction with PSMC5 stretch occupies residues 68 to 223; it reads ATSIPAILKA…VGLHSASIPG (156 aa). Lys122, Lys179, Lys244, and Lys261 each carry N6-acetyllysine. The WD 1 repeat unit spans residues 219-259; that stretch reads ASIPGILALDLCPSDTNKILTGGADKNVVVFDKSSEQILAT. WD repeat units follow at residues 262–301, 304–345, 348–387, 390–429, 433–472, and 473–503; these read GHTK…CVQV, AHES…TKVT, TSGC…NVAN, GHSG…NFKT, DNNF…LHFT, and EHSG…KFYS.

It belongs to the WD repeat PRP19 family. Homotetramer. Component of activated, catalytic and post-catalytic spliceosomes. Component of the Prp19 complex/PRP19C/Nineteen complex/NTC and related complexes described as PRP19-CDC5L splicing complex and PSO4 complex. A homotetramer of PRPF19, CDC5L, PLRG1 and BCAS2 constitute the core of those complexes. The interaction with CDC5L, PLRG1 and BCAS2 is direct within this core complex. At least three less stably associated proteins CTNNBL1, CWC15 and HSPA8 are found in the Prp19 complex. The Prp19 complex associates with the spliceosome during its assembly and remodeling recruiting additional proteins. Component of the XAB2 complex, a multimeric protein complex composed of XAB2, PRPF19, AQR, ZNF830, ISY1, and PPIE. Interacts with CWC22 and EIF4A3 in an RNA-independent manner. Interacts with RPA1 and RPA2; the PRP19-CDC5L complex is recruited to the sites of DNA repair where it interacts with the replication protein A complex (RPA). Interacts with SETMAR; required for SETMAR recruitment to site of DNA damage. Interacts with U2AF2; the interaction is direct and recruits the Prp19 complex to RNA polymerase II C-terminal domain (CTD) and the pre-mRNA. Interacts with PRPF3. Interacts with APEX1, DNTT and PSMB4. Interacts with PSMC5. Interacts with KNSTRN. Interacts (via N-terminus) with CDC5L. Interacts with KHDC4. Interacts with USB1. Interacts with DDX41. In terms of tissue distribution, ubiquitous. Weakly expressed in senescent cells of different tissue origins. Highly expressed in tumor cell lines.

It localises to the nucleus. Its subcellular location is the nucleoplasm. The protein resides in the cytoplasm. The protein localises to the cytoskeleton. It is found in the spindle. It localises to the lipid droplet. The enzyme catalyses S-ubiquitinyl-[E2 ubiquitin-conjugating enzyme]-L-cysteine + [acceptor protein]-L-lysine = [E2 ubiquitin-conjugating enzyme]-L-cysteine + N(6)-ubiquitinyl-[acceptor protein]-L-lysine.. The protein operates within protein modification; protein ubiquitination. Functionally, ubiquitin-protein ligase which is a core component of several complexes mainly involved pre-mRNA splicing and DNA repair. Required for pre-mRNA splicing as component of the spliceosome. Core component of the PRP19C/Prp19 complex/NTC/Nineteen complex which is part of the spliceosome and participates in its assembly, its remodeling and is required for its activity. During assembly of the spliceosome, mediates 'Lys-63'-linked polyubiquitination of the U4 spliceosomal protein PRPF3. Ubiquitination of PRPF3 allows its recognition by the U5 component PRPF8 and stabilizes the U4/U5/U6 tri-snRNP spliceosomal complex. Recruited to RNA polymerase II C-terminal domain (CTD) and the pre-mRNA, it may also couple the transcriptional and spliceosomal machineries. The XAB2 complex, which contains PRPF19, is also involved in pre-mRNA splicing, transcription and transcription-coupled repair. Beside its role in pre-mRNA splicing PRPF19, as part of the PRP19-CDC5L complex, plays a role in the DNA damage response/DDR. It is recruited to the sites of DNA damage by the RPA complex where PRPF19 directly ubiquitinates RPA1 and RPA2. 'Lys-63'-linked polyubiquitination of the RPA complex allows the recruitment of the ATR-ATRIP complex and the activation of ATR, a master regulator of the DNA damage response. May also play a role in DNA double-strand break (DSB) repair by recruiting the repair factor SETMAR to altered DNA. As part of the PSO4 complex may also be involved in the DNA interstrand cross-links/ICLs repair process. In addition, may also mediate 'Lys-48'-linked polyubiquitination of substrates and play a role in proteasomal degradation. May play a role in the biogenesis of lipid droplets. May play a role in neural differentiation possibly through its function as part of the spliceosome. This Homo sapiens (Human) protein is Pre-mRNA-processing factor 19.